The sequence spans 262 residues: UPF0619 GPI-anchored membrane protein C1322.10 (262 aa).

A signal peptide spans 1–20; the sequence is MLARVGTTLFFLANALAAYA. Disordered regions lie at residues 136-165 and 175-194; these read STSASSTSSSTATPSSSSTTSSSSSSSSST and ISSSASSSVSSSSASSSGSI. N-linked (GlcNAc...) asparagine glycosylation is found at Asn207 and Asn227. A lipid anchor (GPI-like-anchor amidated asparagine) is attached at Asn242. The propeptide at 243–262 is removed in mature form; sequence GVAQLSVAACMGIAALMLIA.

The protein belongs to the UPF0619 family.

The protein resides in the golgi apparatus membrane. Its subcellular location is the cell membrane. In Schizosaccharomyces pombe (strain 972 / ATCC 24843) (Fission yeast), this protein is UPF0619 GPI-anchored membrane protein C1322.10.